A 921-amino-acid chain; its full sequence is Probable dipeptidyl-aminopeptidase B (921 aa).

Residues 1–33 (MAGHTEENAQLLSTEQESVSRHSSDSAASTAST) form a disordered region. At 1 to 109 (MAGHTEENAQ…NKSVDKKLRK (109 aa)) the chain is on the cytoplasmic side. A compositionally biased stretch (polar residues) spans 8–17 (NAQLLSTEQE). A helical; Signal-anchor for type II membrane protein membrane pass occupies residues 110 to 130 (LIWIVGGVFIGAWVLALFIFL). The Vacuolar portion of the chain corresponds to 131–921 (GKQAYKHSSE…VPLQIDAAKV (791 aa)). N362 is a glycosylation site (N-linked (GlcNAc...) asparagine). Residue S768 is the Charge relay system of the active site. N822 carries N-linked (GlcNAc...) asparagine glycosylation. Residues D845 and H878 each act as charge relay system in the active site.

It belongs to the peptidase S9B family.

It localises to the vacuole membrane. It carries out the reaction Release of an N-terminal dipeptide, Xaa-Yaa-|-Zaa-, from a polypeptide, preferentially when Yaa is Pro, provided Zaa is neither Pro nor hydroxyproline.. In terms of biological role, type IV dipeptidyl-peptidase which removes N-terminal dipeptides sequentially from polypeptides having unsubstituted N-termini provided that the penultimate residue is proline. The protein is Probable dipeptidyl-aminopeptidase B (dapB) of Sclerotinia sclerotiorum (strain ATCC 18683 / 1980 / Ss-1) (White mold).